Here is a 170-residue protein sequence, read N- to C-terminus: Adenine phosphoribosyltransferase (170 aa).

Belongs to the purine/pyrimidine phosphoribosyltransferase family. In terms of assembly, homodimer.

It localises to the cytoplasm. The enzyme catalyses AMP + diphosphate = 5-phospho-alpha-D-ribose 1-diphosphate + adenine. Its pathway is purine metabolism; AMP biosynthesis via salvage pathway; AMP from adenine: step 1/1. In terms of biological role, catalyzes a salvage reaction resulting in the formation of AMP, that is energically less costly than de novo synthesis. This chain is Adenine phosphoribosyltransferase, found in Cyanothece sp. (strain PCC 7425 / ATCC 29141).